The chain runs to 210 residues: Large ribosomal subunit protein uL4 (210 aa).

Residues 46–89 (QGTASTLTRSEVRGGGRKPYKQKGTGRARQGSIRTPLRPGGGII) are disordered. Positions 60–71 (GGRKPYKQKGTG) are enriched in basic residues.

The protein belongs to the universal ribosomal protein uL4 family. Part of the 50S ribosomal subunit.

In terms of biological role, one of the primary rRNA binding proteins, this protein initially binds near the 5'-end of the 23S rRNA. It is important during the early stages of 50S assembly. It makes multiple contacts with different domains of the 23S rRNA in the assembled 50S subunit and ribosome. Its function is as follows. Forms part of the polypeptide exit tunnel. In Prochlorococcus marinus (strain MIT 9312), this protein is Large ribosomal subunit protein uL4.